A 379-amino-acid polypeptide reads, in one-letter code: Chaperone protein DnaJ (379 aa).

The J domain maps to 5-70 (DYYEVLGVAK…QKRAAYDQYG (66 aa)). The CR-type zinc finger occupies 139–217 (GYDTQIRVPS…CHGAGKVKET (79 aa)). Zn(2+) contacts are provided by Cys-152, Cys-155, Cys-169, Cys-172, Cys-191, Cys-194, Cys-205, and Cys-208. CXXCXGXG motif repeat units lie at residues 152–159 (CEICHGSG), 169–176 (CPTCSGSG), 191–198 (CPKCHGTG), and 205–212 (CGHCHGAG).

The protein belongs to the DnaJ family. Homodimer. Requires Zn(2+) as cofactor.

The protein localises to the cytoplasm. Functionally, participates actively in the response to hyperosmotic and heat shock by preventing the aggregation of stress-denatured proteins and by disaggregating proteins, also in an autonomous, DnaK-independent fashion. Unfolded proteins bind initially to DnaJ; upon interaction with the DnaJ-bound protein, DnaK hydrolyzes its bound ATP, resulting in the formation of a stable complex. GrpE releases ADP from DnaK; ATP binding to DnaK triggers the release of the substrate protein, thus completing the reaction cycle. Several rounds of ATP-dependent interactions between DnaJ, DnaK and GrpE are required for fully efficient folding. Also involved, together with DnaK and GrpE, in the DNA replication of plasmids through activation of initiation proteins. In Paraburkholderia phytofirmans (strain DSM 17436 / LMG 22146 / PsJN) (Burkholderia phytofirmans), this protein is Chaperone protein DnaJ.